We begin with the raw amino-acid sequence, 606 residues long: Homeobox protein B-H1 (606 aa).

Residues Met1–Glu14 are compositionally biased toward polar residues. Disordered stretches follow at residues Met1–Ala65, Tyr104–Ala188, Ala261–Asp340, and Ala508–Val606. Residues Gln21–Leu40 show a composition bias toward basic residues. Low complexity predominate over residues Gln41 to Ala65. Positions Gln108–His118 are enriched in basic residues. Residues His119–Asn138 show a composition bias toward low complexity. Basic residues predominate over residues His166 to Ala188. Positions Glu266 to Glu284 are enriched in acidic residues. Over residues Gly286–Ser295 the composition is skewed to gly residues. The span at His297–Asn314 shows a compositional bias: basic and acidic residues. Over residues Ser315–Ser325 the composition is skewed to polar residues. The homeobox DNA-binding region spans Gln331–Thr390. Pro residues predominate over residues Gly513 to Ser522. Low complexity predominate over residues Ser523–Pro534. The segment covering Ala561–Pro576 has biased composition (pro residues).

This sequence belongs to the Antp homeobox family. In terms of tissue distribution, abundant in the eye-antenna imaginal disk.

The protein resides in the nucleus. Its function is as follows. Functionally required in R1 and R6 receptor cells and primary pigment cells for normal eye development. The chain is Homeobox protein B-H1 (B-H1) from Drosophila ananassae (Fruit fly).